A 291-amino-acid chain; its full sequence is Protease HtpX homolog (291 aa).

The next 2 helical transmembrane spans lie at 11–31 (INTFLILFVFILACGGFGLLA) and 34–54 (FLGMSFFLFILLLAAGYACVQ). A Zn(2+)-binding site is contributed by His140. Glu141 is a catalytic residue. His144 serves as a coordination point for Zn(2+). Helical transmembrane passes span 155 to 175 (IVFGLVSAVGLISDMVLRALI) and 186 to 206 (AFSFAIVLFFSLLAPIAAMLV). Position 215 (Glu215) interacts with Zn(2+).

It belongs to the peptidase M48B family. Requires Zn(2+) as cofactor.

Its subcellular location is the cell membrane. This Tropheryma whipplei (strain TW08/27) (Whipple's bacillus) protein is Protease HtpX homolog.